Reading from the N-terminus, the 115-residue chain is U3-lycotoxin-Ls1n (115 aa).

An N-terminal signal peptide occupies residues 1 to 20; the sequence is MKFVLLFGVLLVTLFSYSSA. The propeptide occupies 21 to 44; the sequence is EMLDDFDQADEDELLSLIEKEEAR. Disulfide bonds link C48–C63, C55–C72, C62–C87, and C74–C85.

This sequence belongs to the neurotoxin 19 (CSTX) family. 01 subfamily. Expressed by the venom gland.

It localises to the secreted. The sequence is that of U3-lycotoxin-Ls1n from Lycosa singoriensis (Wolf spider).